The chain runs to 209 residues: Large ribosomal subunit protein uL3 (209 aa).

Belongs to the universal ribosomal protein uL3 family. As to quaternary structure, part of the 50S ribosomal subunit. Forms a cluster with proteins L14 and L19.

Functionally, one of the primary rRNA binding proteins, it binds directly near the 3'-end of the 23S rRNA, where it nucleates assembly of the 50S subunit. The polypeptide is Large ribosomal subunit protein uL3 (Clostridium botulinum (strain Okra / Type B1)).